A 457-amino-acid chain; its full sequence is Glutamate--tRNA ligase 2 (457 aa).

Positions 9–19 match the 'HIGH' region motif; it reads PSPTGYIHIGN. A 'KMSKS' region motif is present at residues 250 to 254; it reads GLSKR. Lys-253 serves as a coordination point for ATP.

This sequence belongs to the class-I aminoacyl-tRNA synthetase family. Glutamate--tRNA ligase type 1 subfamily. As to quaternary structure, monomer.

The protein resides in the cytoplasm. It carries out the reaction tRNA(Glu) + L-glutamate + ATP = L-glutamyl-tRNA(Glu) + AMP + diphosphate. Functionally, catalyzes the attachment of glutamate to tRNA(Glu) in a two-step reaction: glutamate is first activated by ATP to form Glu-AMP and then transferred to the acceptor end of tRNA(Glu). The polypeptide is Glutamate--tRNA ligase 2 (Brucella melitensis biotype 1 (strain ATCC 23456 / CCUG 17765 / NCTC 10094 / 16M)).